Consider the following 517-residue polypeptide: ATP synthase subunit alpha 1 (517 aa).

174–181 (GDRQTGKT) lines the ATP pocket.

It belongs to the ATPase alpha/beta chains family. F-type ATPases have 2 components, CF(1) - the catalytic core - and CF(0) - the membrane proton channel. CF(1) has five subunits: alpha(3), beta(3), gamma(1), delta(1), epsilon(1). CF(0) has three main subunits: a(1), b(2) and c(9-12). The alpha and beta chains form an alternating ring which encloses part of the gamma chain. CF(1) is attached to CF(0) by a central stalk formed by the gamma and epsilon chains, while a peripheral stalk is formed by the delta and b chains.

Its subcellular location is the cell inner membrane. It carries out the reaction ATP + H2O + 4 H(+)(in) = ADP + phosphate + 5 H(+)(out). Functionally, produces ATP from ADP in the presence of a proton gradient across the membrane. The alpha chain is a regulatory subunit. The sequence is that of ATP synthase subunit alpha 1 from Polaromonas naphthalenivorans (strain CJ2).